Consider the following 680-residue polypeptide: Methionine--tRNA ligase (680 aa).

Residues 15-25 carry the 'HIGH' region motif; sequence PYANGPVHIGH. Zn(2+) contacts are provided by Cys147, Cys150, Cys160, and Cys163. The 'KMSKS' region signature appears at 332-336; sequence KISTS. Thr335 is an ATP binding site. The tRNA-binding domain maps to 579-680; that stretch reads DFLKLDIRVG…AEVAAGSQVK (102 aa).

Belongs to the class-I aminoacyl-tRNA synthetase family. MetG type 1 subfamily. In terms of assembly, homodimer. Zn(2+) is required as a cofactor.

The protein localises to the cytoplasm. It catalyses the reaction tRNA(Met) + L-methionine + ATP = L-methionyl-tRNA(Met) + AMP + diphosphate. Functionally, is required not only for elongation of protein synthesis but also for the initiation of all mRNA translation through initiator tRNA(fMet) aminoacylation. The chain is Methionine--tRNA ligase from Porphyromonas gingivalis (strain ATCC BAA-308 / W83).